The following is a 462-amino-acid chain: Coagulation factor IX (462 aa).

A signal peptide spans 1 to 21; the sequence is MADAPGLIPIFLLGYLLSTEC. The propeptide occupies 22 to 39; that stretch reads AVFLDRENATKILTRPKR. The Ca(2+) site is built by Tyr40, Asn41, Glu46, Glu47, Glu54, Glu56, Glu59, Glu60, Glu65, Glu66, and Glu69. One can recognise a Gla domain in the interval 40–86; sequence YNSGKLEEFVQGNLERECIEERCSFEEAREVFENTEKTTEFWKQYVD. Residues Glu46, Glu47, Glu54, Glu56, Glu59, Glu60, Glu65, Glu66, Glu69, Glu72, and Glu75 each carry the 4-carboxyglutamate modification. Glu54 contacts Mg(2+). Residues Cys57 and Cys62 are joined by a disulfide bond. Glu59 contacts Mg(2+). Residue Glu65 coordinates Mg(2+). Glu69 contributes to the Mg(2+) binding site. Glu75 provides a ligand contact to Ca(2+). Glu75 contacts Mg(2+). Thr78 carries O-linked (GalNAc...) threonine glycosylation. Residues Glu79, Asp86, Gly87, and Gln89 each coordinate Ca(2+). Residue Glu79 is modified to 4-carboxyglutamate. Glu79 lines the Mg(2+) pocket. Residues 86 to 122 form the EGF-like; calcium-binding domain; sequence DGDQCESNPCLNGGICKDDINSYECWCQAGFEGRNCE. 10 cysteine pairs are disulfide-bonded: Cys90–Cys101, Cys95–Cys110, Cys112–Cys121, Cys127–Cys138, Cys134–Cys148, Cys150–Cys163, Cys171–Cys336, Cys253–Cys269, Cys383–Cys397, and Cys408–Cys436. O-linked (Glc...) serine glycosylation occurs at Ser92. 2 residues coordinate Ca(2+): Asp103 and Asp104. Asp103 is modified ((3R)-3-hydroxyaspartate). Ser107 is subject to Phosphoserine. Positions 186 to 227 are cleaved as a propeptide — activation peptide; the sequence is AETVFSNTDYGNSTELILDDITNSTILDNLTENSEPINDFTR. Residue Tyr195 is modified to Sulfotyrosine. At Ser198 the chain carries Phosphoserine. Residue Thr199 is modified to Phosphothreonine; alternate. Thr199 carries O-linked (GalNAc...) threonine; alternate glycosylation. N-linked (GlcNAc...) asparagine glycans are attached at residues Asn208 and Asn214. Residues Thr216 and Thr226 are each glycosylated (O-linked (GalNAc...) threonine). The Peptidase S1 domain occupies 228 to 460; sequence VVGGENAKPG…YVNWIKEKTK (233 aa). Catalysis depends on His268, which acts as the Charge relay system. Ca(2+) is bound by residues Glu282, Asn284, Glu287, Glu289, and Glu292. Residue Asn307 is glycosylated (N-linked (GlcNAc...) asparagine). The active-site Charge relay system is the Asp316. The active-site Charge relay system is the Ser412.

This sequence belongs to the peptidase S1 family. Heterodimer of a light chain and a heavy chain; disulfide-linked. Interacts (inactive and activated) with F11 (activated) in calcium-dependent manner. Interacts with SERPINC1. Interacts (inactive and activated) with nitrophorin-2, an anticoagulant protein from Rhodnius prolixus. Post-translationally, activated by factor XIa, which excises the activation peptide. The propeptide can also be removed by snake venom protease. Activated by coagulation factor VIIa-tissue factor (F7-F3) complex in calcium-dependent manner. The iron and 2-oxoglutarate dependent 3-hydroxylation of aspartate and asparagine is (R) stereospecific within EGF domains. In terms of processing, predominantly O-glucosylated at Ser-92 by POGLUT1 in vitro.

It localises to the secreted. It catalyses the reaction Selective cleavage of Arg-|-Ile bond in factor X to form factor Xa.. Functionally, factor IX is a vitamin K-dependent plasma protein that participates in the intrinsic pathway of blood coagulation by converting factor X to its active form in the presence of Ca(2+) ions, phospholipids, and factor VIIIa. The chain is Coagulation factor IX (F9) from Rattus norvegicus (Rat).